The following is an 833-amino-acid chain: G-type lectin S-receptor-like serine/threonine-protein kinase RKS1 (833 aa).

Positions 1–18 (MKVVFVIFFFFLFQFCIS) are cleaved as a signal peptide. A Bulb-type lectin domain is found at 19-144 (VDTIMRRQSL…VTGRSFWESF (126 aa)). Topologically, residues 19-440 (VDTIMRRQSL…NGLSGKRRVL (422 aa)) are extracellular. Residues asparagine 79, asparagine 92, asparagine 100, asparagine 109, asparagine 228, and asparagine 256 are each glycosylated (N-linked (GlcNAc...) asparagine). An EGF-like domain is found at 280–330 (PKEQCDNYAHCGPNGYCDSPSSKTFECTCLPGFEPKFPRHWFLRDSSGGCT). 3 cysteine pairs are disulfide-bonded: cysteine 284–cysteine 296, cysteine 290–cysteine 306, and cysteine 308–cysteine 329. Residues 338–421 (CSEKDGFVKL…SGQDFYIRVD (84 aa)) enclose the PAN domain. N-linked (GlcNAc...) asparagine glycosylation is found at asparagine 363 and asparagine 376. Disulfide bonds link cysteine 369-cysteine 396 and cysteine 373-cysteine 379. Residues 441-461 (LILISLIAAVMLLTVILFCVV) traverse the membrane as a helical segment. Topologically, residues 462-833 (RERRKSNRHR…DVTFSDIQGR (372 aa)) are cytoplasmic. Residues 515 to 800 (FSSQNKLGAG…NLPNPKHPAF (286 aa)) form the Protein kinase domain. ATP is bound by residues 521–529 (LGAGGFGPV) and lysine 543. Serine 549 and serine 564 each carry phosphoserine. A caM-binding region spans residues 604 to 621 (EQRAELDWPKRMEIVRGI). Aspartate 640 serves as the catalytic Proton acceptor. Residues serine 644 and serine 657 each carry the phosphoserine modification. At threonine 674 the chain carries Phosphothreonine. 2 positions are modified to phosphoserine: serine 717 and serine 821.

Belongs to the protein kinase superfamily. Ser/Thr protein kinase family.

The protein resides in the cell membrane. The enzyme catalyses L-seryl-[protein] + ATP = O-phospho-L-seryl-[protein] + ADP + H(+). It carries out the reaction L-threonyl-[protein] + ATP = O-phospho-L-threonyl-[protein] + ADP + H(+). This Arabidopsis thaliana (Mouse-ear cress) protein is G-type lectin S-receptor-like serine/threonine-protein kinase RKS1 (RKS1).